A 123-amino-acid polypeptide reads, in one-letter code: Holo-[acyl-carrier-protein] synthase (123 aa).

Mg(2+) is bound by residues Asp8 and Glu50.

Belongs to the P-Pant transferase superfamily. AcpS family. The cofactor is Mg(2+).

The protein resides in the cytoplasm. The enzyme catalyses apo-[ACP] + CoA = holo-[ACP] + adenosine 3',5'-bisphosphate + H(+). Functionally, transfers the 4'-phosphopantetheine moiety from coenzyme A to a Ser of acyl-carrier-protein. The polypeptide is Holo-[acyl-carrier-protein] synthase (Kocuria rhizophila (strain ATCC 9341 / DSM 348 / NBRC 103217 / DC2201)).